A 304-amino-acid chain; its full sequence is Glutaminase (304 aa).

Substrate contacts are provided by Ser-63, Asn-113, Glu-157, Asn-164, Tyr-188, Tyr-240, and Val-258.

The protein belongs to the glutaminase family. As to quaternary structure, homotetramer.

The catalysed reaction is L-glutamine + H2O = L-glutamate + NH4(+). This chain is Glutaminase, found in Ralstonia nicotianae (strain ATCC BAA-1114 / GMI1000) (Ralstonia solanacearum).